The sequence spans 38 residues: Photosystem II reaction center protein L (38 aa).

Residues 17–37 (SLYFGLLLIFVLAVLFSSYIF) form a helical membrane-spanning segment.

This sequence belongs to the PsbL family. As to quaternary structure, PSII is composed of 1 copy each of membrane proteins PsbA, PsbB, PsbC, PsbD, PsbE, PsbF, PsbH, PsbI, PsbJ, PsbK, PsbL, PsbM, PsbT, PsbX, PsbY, PsbZ, Psb30/Ycf12, at least 3 peripheral proteins of the oxygen-evolving complex and a large number of cofactors. It forms dimeric complexes.

The protein resides in the plastid. It localises to the chloroplast thylakoid membrane. Functionally, one of the components of the core complex of photosystem II (PSII). PSII is a light-driven water:plastoquinone oxidoreductase that uses light energy to abstract electrons from H(2)O, generating O(2) and a proton gradient subsequently used for ATP formation. It consists of a core antenna complex that captures photons, and an electron transfer chain that converts photonic excitation into a charge separation. This subunit is found at the monomer-monomer interface and is required for correct PSII assembly and/or dimerization. The protein is Photosystem II reaction center protein L of Chlamydomonas moewusii (Chlamydomonas eugametos).